The sequence spans 399 residues: CCA-adding enzyme (399 aa).

Residues G32 and R35 each coordinate ATP. Positions 32 and 35 each coordinate CTP. Residues D45 and D47 each contribute to the Mg(2+) site. ATP contacts are provided by R116, D159, R162, R165, and R168. R116, D159, R162, R165, and R168 together coordinate CTP.

Belongs to the tRNA nucleotidyltransferase/poly(A) polymerase family. Bacterial CCA-adding enzyme type 3 subfamily. As to quaternary structure, homodimer. The cofactor is Mg(2+).

The enzyme catalyses a tRNA precursor + 2 CTP + ATP = a tRNA with a 3' CCA end + 3 diphosphate. The catalysed reaction is a tRNA with a 3' CCA end + 2 CTP + ATP = a tRNA with a 3' CCACCA end + 3 diphosphate. Catalyzes the addition and repair of the essential 3'-terminal CCA sequence in tRNAs without using a nucleic acid template. Adds these three nucleotides in the order of C, C, and A to the tRNA nucleotide-73, using CTP and ATP as substrates and producing inorganic pyrophosphate. tRNA 3'-terminal CCA addition is required both for tRNA processing and repair. Also involved in tRNA surveillance by mediating tandem CCA addition to generate a CCACCA at the 3' terminus of unstable tRNAs. While stable tRNAs receive only 3'-terminal CCA, unstable tRNAs are marked with CCACCA and rapidly degraded. This chain is CCA-adding enzyme, found in Streptococcus pneumoniae serotype 19F (strain G54).